The primary structure comprises 513 residues: ATP synthase subunit alpha (513 aa).

169 to 176 (GDRQTGKT) is an ATP binding site.

The protein belongs to the ATPase alpha/beta chains family. In terms of assembly, F-type ATPases have 2 components, CF(1) - the catalytic core - and CF(0) - the membrane proton channel. CF(1) has five subunits: alpha(3), beta(3), gamma(1), delta(1), epsilon(1). CF(0) has three main subunits: a(1), b(2) and c(9-12). The alpha and beta chains form an alternating ring which encloses part of the gamma chain. CF(1) is attached to CF(0) by a central stalk formed by the gamma and epsilon chains, while a peripheral stalk is formed by the delta and b chains.

Its subcellular location is the cell inner membrane. It carries out the reaction ATP + H2O + 4 H(+)(in) = ADP + phosphate + 5 H(+)(out). Produces ATP from ADP in the presence of a proton gradient across the membrane. The alpha chain is a regulatory subunit. This chain is ATP synthase subunit alpha, found in Ralstonia nicotianae (strain ATCC BAA-1114 / GMI1000) (Ralstonia solanacearum).